The sequence spans 356 residues: Aromatic dipeptide epimerase (356 aa).

Residues Thr136 and 161 to 163 (KVK) contribute to the substrate site. Residues Asp191, Glu219, and Asp244 each coordinate Mg(2+). Substrate contacts are provided by residues Lys268 and 320 to 322 (DLD).

Belongs to the mandelate racemase/muconate lactonizing enzyme family. Requires Mg(2+) as cofactor.

In terms of biological role, has epimerase activity with a variety of hydrophobic dipeptides (in vitro). Enzyme activity is highest with L-Phe-L-Tyr, but is still relatively low, suggesting that L-Phe-L-Tyr is not the physiological substrate. The polypeptide is Aromatic dipeptide epimerase (Herpetosiphon aurantiacus (strain ATCC 23779 / DSM 785 / 114-95)).